We begin with the raw amino-acid sequence, 340 residues long: DnaJ homolog subfamily B member 1 (340 aa).

The region spanning 2 to 70 (GKDYYQTLGL…REIFDRYGEE (69 aa)) is the J domain. The tract at residues 68-90 (GEEGLKGSGPSGGSSGGTNGTSF) is disordered. The span at 73-86 (KGSGPSGGSSGGTN) shows a compositional bias: gly residues. Position 307 is a phosphothreonine (Thr307).

As to quaternary structure, interacts with DNAJC3. Interacts with HSF1 (via transactivation domain); this interaction results in the inhibition of heat shock- and HSF1-induced transcriptional activity during the attenuation and recovery phase period of the heat shock response. Interacts with BAG3.

The protein resides in the cytoplasm. It is found in the nucleus. The protein localises to the nucleolus. In terms of biological role, interacts with HSP70 and can stimulate its ATPase activity. Stimulates the association between HSC70 and HIP. Negatively regulates heat shock-induced HSF1 transcriptional activity during the attenuation and recovery phase period of the heat shock response. Stimulates ATP hydrolysis and the folding of unfolded proteins mediated by HSPA1A/B (in vitro). The sequence is that of DnaJ homolog subfamily B member 1 (DNAJB1) from Bos taurus (Bovine).